The chain runs to 241 residues: Regulatory protein VirG (241 aa).

The Response regulatory domain occupies 3–117; sequence HVLVIDDDVA…EFLARIRVAL (115 aa). Asp52 is subject to 4-aspartylphosphate. The segment at residues 129–229 is a DNA-binding region (ompR/PhoB-type); the sequence is RRSFYFADWT…ARGAGYFFDA (101 aa).

Post-translationally, phosphorylated by wide host range (WHR) VirA protein.

Its subcellular location is the cytoplasm. Its function is as follows. VirG is required for the positive regulation of at least two vir loci encoded by the Ri plasmid of A.rhizogenes. The protein is Regulatory protein VirG (virG) of Rhizobium rhizogenes (Agrobacterium rhizogenes).